Consider the following 421-residue polypeptide: UDP-N-acetylglucosamine 1-carboxyvinyltransferase (421 aa).

Residue Lys22 to Asn23 coordinates phosphoenolpyruvate. Arg93 is a binding site for UDP-N-acetyl-alpha-D-glucosamine. Cys117 functions as the Proton donor in the catalytic mechanism. At Cys117 the chain carries 2-(S-cysteinyl)pyruvic acid O-phosphothioketal. Residues Arg122–Gln126, Asp309, and Ile331 contribute to the UDP-N-acetyl-alpha-D-glucosamine site.

Belongs to the EPSP synthase family. MurA subfamily.

Its subcellular location is the cytoplasm. The enzyme catalyses phosphoenolpyruvate + UDP-N-acetyl-alpha-D-glucosamine = UDP-N-acetyl-3-O-(1-carboxyvinyl)-alpha-D-glucosamine + phosphate. It functions in the pathway cell wall biogenesis; peptidoglycan biosynthesis. Cell wall formation. Adds enolpyruvyl to UDP-N-acetylglucosamine. This chain is UDP-N-acetylglucosamine 1-carboxyvinyltransferase, found in Albidiferax ferrireducens (strain ATCC BAA-621 / DSM 15236 / T118) (Rhodoferax ferrireducens).